We begin with the raw amino-acid sequence, 101 residues long: Small ribosomal subunit protein uS14 (101 aa).

The protein belongs to the universal ribosomal protein uS14 family. As to quaternary structure, part of the 30S ribosomal subunit. Contacts proteins S3 and S10.

Its function is as follows. Binds 16S rRNA, required for the assembly of 30S particles and may also be responsible for determining the conformation of the 16S rRNA at the A site. This chain is Small ribosomal subunit protein uS14, found in Buchnera aphidicola subsp. Acyrthosiphon pisum (strain APS) (Acyrthosiphon pisum symbiotic bacterium).